The sequence spans 188 residues: Phosphoheptose isomerase (188 aa).

The 156-residue stretch at Val-33–Ser-188 folds into the SIS domain. Asn-48–Gly-50 serves as a coordination point for substrate. Positions 57 and 61 each coordinate Zn(2+). Substrate is bound by residues Glu-61, Asn-90–Asp-91, Ser-116–Ser-118, Ser-121, and Gln-168. The Zn(2+) site is built by Gln-168 and His-176.

It belongs to the SIS family. GmhA subfamily. As to quaternary structure, homotetramer. It depends on Zn(2+) as a cofactor.

The protein localises to the cytoplasm. It carries out the reaction 2 D-sedoheptulose 7-phosphate = D-glycero-alpha-D-manno-heptose 7-phosphate + D-glycero-beta-D-manno-heptose 7-phosphate. Its pathway is carbohydrate biosynthesis; D-glycero-D-manno-heptose 7-phosphate biosynthesis; D-glycero-alpha-D-manno-heptose 7-phosphate and D-glycero-beta-D-manno-heptose 7-phosphate from sedoheptulose 7-phosphate: step 1/1. Catalyzes the isomerization of sedoheptulose 7-phosphate in D-glycero-D-manno-heptose 7-phosphate. This is Phosphoheptose isomerase from Rhodospirillum rubrum (strain ATCC 11170 / ATH 1.1.1 / DSM 467 / LMG 4362 / NCIMB 8255 / S1).